Reading from the N-terminus, the 178-residue chain is Fluoride-specific ion channel FluC 2 (178 aa).

4 consecutive transmembrane segments (helical) span residues P25 to I45, F63 to A83, G97 to F117, and I129 to A149. Na(+) contacts are provided by G104 and S107.

Belongs to the fluoride channel Fluc/FEX (TC 1.A.43) family.

The protein resides in the cell membrane. The catalysed reaction is fluoride(in) = fluoride(out). Its activity is regulated as follows. Na(+) is not transported, but it plays an essential structural role and its presence is essential for fluoride channel function. In terms of biological role, fluoride-specific ion channel. Important for reducing fluoride concentration in the cell, thus reducing its toxicity. This Bifidobacterium longum (strain NCC 2705) protein is Fluoride-specific ion channel FluC 2.